The primary structure comprises 106 residues: Small ribosomal subunit protein bS20 (106 aa).

Basic residues predominate over residues 1 to 20 (MATAKPKKKNPRLASGRKRV). The interval 1–21 (MATAKPKKKNPRLASGRKRVR) is disordered.

Belongs to the bacterial ribosomal protein bS20 family.

Its function is as follows. Binds directly to 16S ribosomal RNA. The polypeptide is Small ribosomal subunit protein bS20 (Polaromonas naphthalenivorans (strain CJ2)).